The primary structure comprises 90 residues: U7-theraphotoxin-Hhn1a 4 (90 aa).

Residues 1-19 (MKTAIFTVVLALAVFAVLS) form the signal peptide. Positions 20-50 (FGWEANEEALSEEFTELIHEKEAASETEARE) are excised as a propeptide. Disulfide bonds link cysteine 51–cysteine 65, cysteine 58–cysteine 70, and cysteine 64–cysteine 81.

This sequence belongs to the neurotoxin 10 (Hwtx-1) family. 13 (Hntx-13) subfamily. In terms of tissue distribution, expressed by the venom gland.

The protein localises to the secreted. Functionally, ion channel inhibitor. The sequence is that of U7-theraphotoxin-Hhn1a 4 from Cyriopagopus hainanus (Chinese bird spider).